We begin with the raw amino-acid sequence, 1124 residues long: Regulator of nonsense transcripts 1 (1124 aa).

The sufficient for interaction with RENT2 stretch occupies residues 1-410 (MSVEAYGPSS…LRSSVGAPVE (410 aa)). Ser-10 and Ser-31 each carry phosphoserine. The segment at 39 to 69 (TLPSQTQTPPGGPGGAGGPGGAGAGGAAGQL) is disordered. Residues 51–66 (PGGAGGPGGAGAGGAA) are compositionally biased toward gly residues. Residues 110–267 (TKDLPVHACS…NKLEELWKEN (158 aa)) form the Upf1 CH-rich domain. Zn(2+)-binding residues include Cys-118, Cys-121, Cys-132, Ser-135, Cys-140, His-150, His-154, Cys-160, Cys-178, Cys-181, Cys-204, and Cys-208. The segment at 118-150 (CSYCGIHDPACVVYCNTSKKWFCNGRGNTSGSH) is C3H. Residues 132–160 (CNTSKKWFCNGRGNTSGSHIVNHLVRAKC) form a CC/SHH/C region. The tract at residues 178–208 (CYNCGCRNVFLLGFIPAKADSVVVLLCRQPC) is C4. Residues Gln-481 and 501–505 (GTGKT) each bind ATP. Phosphoserine is present on Ser-560. Residues Gln-671, Tyr-708, and Glu-839 each contribute to the ATP site. Position 951 is a phosphoserine (Ser-951). Disordered regions lie at residues 1004–1053 (FGQA…VASQ) and 1066–1091 (SMSQ…YLGD). At Arg-1014 the chain carries Omega-N-methylarginine. Positions 1020–1029 (KTGRGGRQKN) are enriched in basic residues. The span at 1036–1053 (PSQTTLPNSQASQDVASQ) shows a compositional bias: polar residues. Low complexity predominate over residues 1066–1081 (SMSQPSQMSQPGLSQP). Phosphoserine is present on residues Ser-1084, Ser-1102, Ser-1105, and Ser-1122. 2 consecutive short sequence motifs ([ST]-Q motif) follow at residues 1084 to 1085 (SQ) and 1102 to 1103 (SQ). The segment at 1105-1124 (STYQGERAYQHGGVTGLSQY) is disordered.

It belongs to the DNA2/NAM7 helicase family. Found in a post-splicing messenger ribonucleoprotein (mRNP) complex. Associates with the exon junction complex (EJC). Associates with the SGM1C complex; is phosphorylated by the complex kinase component SGM1. Part of a complex composed of SMG1, DHX34 and UPF1; within the complex DHX34 acts as a scaffolding protein to facilitate SMG1 phosphorylation of UPF1. Interacts with UPF2. Interacts with UPF3A and UPF3B. Interacts with EST1A. Interacts with SLBP. Interacts (when hyperphosphorylated) with PNRC2. Interacts with AGO1 and AGO2. Interacts with GSPT2. Interacts with isoform 1 and isoform 5 of ADAR/ADAR1. Interacts with SMG7. Interacts with ZC3H12A; this interaction occurs in a mRNA translationally active- and termination-dependent manner and is essential for ZC3H12A-mediated degradation of target mRNAs. Interacts with CPSF6. Interacts with MOV10; the interaction is direct and RNA-dependent. Interacts with SHFL; the interaction increases in the presence of RNA. Interacts with UPF2 and DDX4; interactions are mediated by TDRD6. Interacts with DHX34 and PABPC1/PABP1; the interactions are RNA-independent. Interacts with RBM46. In terms of processing, phosphorylated by SMG1; required for formation of mRNA surveillance complexes. In terms of tissue distribution, localizes in male germ cells.

It localises to the cytoplasm. Its subcellular location is the P-body. The protein resides in the nucleus. It is found in the perinuclear region. The enzyme catalyses ATP + H2O = ADP + phosphate + H(+). RNA-dependent helicase required for nonsense-mediated decay (NMD) of aberrant mRNAs containing premature stop codons and modulates the expression level of normal mRNAs. Is recruited to mRNAs upon translation termination and undergoes a cycle of phosphorylation and dephosphorylation; its phosphorylation appears to be a key step in NMD. Recruited by release factors to stalled ribosomes together with the SMG1C protein kinase complex to form the transient SURF (SMG1-UPF1-eRF1-eRF3) complex. In EJC-dependent NMD, the SURF complex associates with the exon junction complex (EJC) (located 50-55 or more nucleotides downstream from the termination codon) through UPF2 and allows the formation of an UPF1-UPF2-UPF3 surveillance complex which is believed to activate NMD. Phosphorylated UPF1 is recognized by EST1B/SMG5, SMG6 and SMG7 which are thought to provide a link to the mRNA degradation machinery involving exonucleolytic and endonucleolytic pathways, and to serve as adapters to protein phosphatase 2A (PP2A), thereby triggering UPF1 dephosphorylation and allowing the recycling of NMD factors. UPF1 can also activate NMD without UPF2 or UPF3, and in the absence of the NMD-enhancing downstream EJC indicative for alternative NMD pathways. Plays a role in replication-dependent histone mRNA degradation at the end of phase S; the function is independent of UPF2. For the recognition of premature termination codons (PTC) and initiation of NMD a competitive interaction between UPF1 and PABPC1 with the ribosome-bound release factors is proposed. The ATPase activity of UPF1 is required for disassembly of mRNPs undergoing NMD. Together with UPF2 and dependent on TDRD6, mediates the degradation of mRNA harboring long 3'UTR by inducing the NMD machinery. Also capable of unwinding double-stranded DNA and translocating on single-stranded DNA. The polypeptide is Regulator of nonsense transcripts 1 (Mus musculus (Mouse)).